The following is a 447-amino-acid chain: Methionine aminopeptidase 2 (447 aa).

The interval 1 to 86 (MAGATEGEDT…KNKKKKKKKI (86 aa)) is disordered. A compositionally biased stretch (basic and acidic residues) spans 8-32 (EDTKVIESKINELNIDKPKLEDNNE). Over residues 43 to 60 (GGDDDDDKEDDDDNDEIT) the composition is skewed to acidic residues. The span at 71-86 (KKKKKNKNKKKKKKKI) shows a compositional bias: basic residues. Histidine 198 contacts substrate. 3 residues coordinate a divalent metal cation: aspartate 218, aspartate 229, and histidine 300. Position 308 (histidine 308) interacts with substrate. A divalent metal cation contacts are provided by glutamate 333 and glutamate 428.

The protein belongs to the peptidase M24A family. Methionine aminopeptidase eukaryotic type 2 subfamily. Requires Co(2+) as cofactor. Zn(2+) is required as a cofactor. The cofactor is Mn(2+). It depends on Fe(2+) as a cofactor.

It localises to the cytoplasm. The enzyme catalyses Release of N-terminal amino acids, preferentially methionine, from peptides and arylamides.. Its function is as follows. Cotranslationally removes the N-terminal methionine from nascent proteins. The N-terminal methionine is often cleaved when the second residue in the primary sequence is small and uncharged (Met-Ala-, Cys, Gly, Pro, Ser, Thr, or Val). This chain is Methionine aminopeptidase 2, found in Candida albicans (strain WO-1) (Yeast).